Consider the following 66-residue polypeptide: Large ribosomal subunit protein bL35c (66 aa).

The protein belongs to the bacterial ribosomal protein bL35 family.

The protein localises to the plastid. It is found in the chloroplast. The sequence is that of Large ribosomal subunit protein bL35c from Guillardia theta (Cryptophyte).